The primary structure comprises 210 residues: N-(5'-phosphoribosyl)anthranilate isomerase (210 aa).

The protein belongs to the TrpF family.

The enzyme catalyses N-(5-phospho-beta-D-ribosyl)anthranilate = 1-(2-carboxyphenylamino)-1-deoxy-D-ribulose 5-phosphate. It functions in the pathway amino-acid biosynthesis; L-tryptophan biosynthesis; L-tryptophan from chorismate: step 3/5. The chain is N-(5'-phosphoribosyl)anthranilate isomerase (TRP1) from Eremothecium gossypii (strain ATCC 10895 / CBS 109.51 / FGSC 9923 / NRRL Y-1056) (Yeast).